The following is a 1647-amino-acid chain: Transcription elongation factor SPT6 homolog (1647 aa).

Residues 1 to 209 are disordered; the sequence is MARNAISDDE…SKKKKYRQGS (209 aa). The span at 7 to 20 shows a compositional bias: acidic residues; the sequence is SDDEEDHELEDDDG. Basic and acidic residues predominate over residues 21 to 30; sequence EPVHGDPAEH. Acidic residues predominate over residues 31 to 67; that stretch reads DENDDEEDDDDVGNEYENDGFIVNDEDEEEEEEEDEE. Positions 103-114 are enriched in basic residues; that stretch reads KFKKRQYKRLKK. The segment covering 132-151 has biased composition (basic and acidic residues); it reads DSRGGTRRSAEDKIKDRLFD. Positions 152-191 are enriched in acidic residues; that stretch reads DVDVDDPPDDVGDEEDLVVEEDVVGSEDEMADFIVDEDDE. An S1 motif domain is found at 1103-1174; it reads GRIVQASVRR…QRYQVFLICK (72 aa). Residues 1429-1647 form a disordered region; the sequence is PMRSPADHGS…RKSDGGGGGW (219 aa). Tandem repeats lie at residues 1443-1444 and 1452-1453. Residues 1443 to 1647 are 12 X 2 AA repeats of [WG]-[GW] repeats; the sequence is GWGSSQSEGG…RKSDGGGGGW (205 aa). A compositionally biased stretch (gly residues) spans 1462-1471; the sequence is SGRGGEYRNG. The span at 1496–1507 shows a compositional bias: basic and acidic residues; that stretch reads RRDDMNSDRQDG. 6 tandem repeats follow at residues 1511 to 1512, 1522 to 1523, 1530 to 1531, 1547 to 1548, 1563 to 1564, and 1574 to 1575. Gly residues-rich tracts occupy residues 1519–1532, 1539–1552, 1561–1579, and 1588–1600; these read ADGGWGNSGGGGWG, KTGGGSTGGWGSES, GSWGSGSGGGGSGGWGNDS, and GGFGSGSGGGGSD. 4 repeat units span residues 1601-1602, 1615-1616, 1630-1631, and 1646-1647.

It belongs to the SPT6 family. As to quaternary structure, interacts (via N-terminus) with IWS1. In terms of tissue distribution, expressed in shoot apical meristem, leaf primordia, vasculature of young leaves, inflorescence meristem, floral meristem, young floral organs, developing ovules and anthers.

It localises to the nucleus. Its function is as follows. Transcription elongation factor that enhances the transcription elongation by RNA polymerase II (RNAPII). Plays an important role in regulating embryo apical and basal patterning during early embryogenesis, partly through negative regulation of the transcription factors PHABULOSA and PHAVOLUTA. The protein is Transcription elongation factor SPT6 homolog of Arabidopsis thaliana (Mouse-ear cress).